Consider the following 264-residue polypeptide: NAD kinase (264 aa).

Residue aspartate 45 is the Proton acceptor of the active site. NAD(+) is bound by residues 45 to 46, 121 to 122, arginine 147, aspartate 149, alanine 184, and glutamine 221; these read DG and NE.

The protein belongs to the NAD kinase family. The cofactor is a divalent metal cation.

The protein resides in the cytoplasm. It catalyses the reaction NAD(+) + ATP = ADP + NADP(+) + H(+). Its function is as follows. Involved in the regulation of the intracellular balance of NAD and NADP, and is a key enzyme in the biosynthesis of NADP. Catalyzes specifically the phosphorylation on 2'-hydroxyl of the adenosine moiety of NAD to yield NADP. The polypeptide is NAD kinase (Leuconostoc mesenteroides subsp. mesenteroides (strain ATCC 8293 / DSM 20343 / BCRC 11652 / CCM 1803 / JCM 6124 / NCDO 523 / NBRC 100496 / NCIMB 8023 / NCTC 12954 / NRRL B-1118 / 37Y)).